The sequence spans 311 residues: tRNA-cytidine(32) 2-sulfurtransferase (311 aa).

The PP-loop motif motif lies at 47–52 (SGGKDS). [4Fe-4S] cluster-binding residues include Cys122, Cys125, and Cys213.

Belongs to the TtcA family. Homodimer. Mg(2+) is required as a cofactor. The cofactor is [4Fe-4S] cluster.

It localises to the cytoplasm. It carries out the reaction cytidine(32) in tRNA + S-sulfanyl-L-cysteinyl-[cysteine desulfurase] + AH2 + ATP = 2-thiocytidine(32) in tRNA + L-cysteinyl-[cysteine desulfurase] + A + AMP + diphosphate + H(+). The protein operates within tRNA modification. Catalyzes the ATP-dependent 2-thiolation of cytidine in position 32 of tRNA, to form 2-thiocytidine (s(2)C32). The sulfur atoms are provided by the cysteine/cysteine desulfurase (IscS) system. The sequence is that of tRNA-cytidine(32) 2-sulfurtransferase from Enterobacter sp. (strain 638).